We begin with the raw amino-acid sequence, 35 residues long: Photosystem II reaction center protein T (35 aa).

Residues 3 to 23 (ALVYTFLLVGTLGIIFFAIFF) traverse the membrane as a helical segment.

It belongs to the PsbT family. PSII is composed of 1 copy each of membrane proteins PsbA, PsbB, PsbC, PsbD, PsbE, PsbF, PsbH, PsbI, PsbJ, PsbK, PsbL, PsbM, PsbT, PsbY, PsbZ, Psb30/Ycf12, at least 3 peripheral proteins of the oxygen-evolving complex and a large number of cofactors. It forms dimeric complexes.

It localises to the plastid. Its subcellular location is the chloroplast thylakoid membrane. Found at the monomer-monomer interface of the photosystem II (PS II) dimer, plays a role in assembly and dimerization of PSII. PSII is a light-driven water plastoquinone oxidoreductase, using light energy to abstract electrons from H(2)O, generating a proton gradient subsequently used for ATP formation. The protein is Photosystem II reaction center protein T of Chara vulgaris (Common stonewort).